Consider the following 152-residue polypeptide: MKTPIELKILDSRIGSEFPLPAYATPGSAGMDLRAMIDTTLTIAPGETVLIPTGIAIHVADQGLAAVILPRSGLGHKHGIVLGNLVGLIDSDYQGPLMVSCWNRSDSPFALEIGDRLAQLVFVPVVQAQFKLVDEFDSSDRGEGGFGHSGTK.

Substrate-binding positions include 71–73 (RSG), Asn84, 88–90 (LID), and Met98.

The protein belongs to the dUTPase family. It depends on Mg(2+) as a cofactor.

It carries out the reaction dUTP + H2O = dUMP + diphosphate + H(+). It participates in pyrimidine metabolism; dUMP biosynthesis; dUMP from dCTP (dUTP route): step 2/2. This enzyme is involved in nucleotide metabolism: it produces dUMP, the immediate precursor of thymidine nucleotides and it decreases the intracellular concentration of dUTP so that uracil cannot be incorporated into DNA. This Shewanella baltica (strain OS155 / ATCC BAA-1091) protein is Deoxyuridine 5'-triphosphate nucleotidohydrolase.